The chain runs to 1216 residues: Apical endosomal glycoprotein (1216 aa).

The N-terminal stretch at 1–22 (MPLSSHLLPALVLFLAGSSGWA) is a signal peptide. Topologically, residues 23–1151 (WVPNHCRSPG…SPGNTAAPGS (1129 aa)) are extracellular. The LDL-receptor class A 1; truncated domain occupies 26 to 53 (NHCRSPGQAVCNFVCDCRDCSDEAQCGY). Residues 64–222 (FACDFEQDPC…DDLEFWDCGL (159 aa)) form the MAM 1 domain. Residue N203 is glycosylated (N-linked (GlcNAc...) asparagine). One can recognise an LDL-receptor class A 2 domain in the interval 228–266 (NCPPGHHHCQNKVCVEPQQLCDGEDNCGDLSDENPLTCG). 3 cysteine pairs are disulfide-bonded: C229-C241, C236-C254, and C248-C265. The region spanning 269–425 (IATDFETGLG…DLILSDHCRP (157 aa)) is the MAM 2 domain. The disordered stretch occupies residues 280–307 (WNRSEGWSRNHRAGGPERPSWPRRDHSR). N-linked (GlcNAc...) asparagine glycosylation is found at N281 and N339. The interval 429–455 (VSTLQPLPPGPRAPAPQPLPPSSRLQD) is disordered. Residues 434–449 (PLPPGPRAPAPQPLPP) are compositionally biased toward pro residues. The LDL-receptor class A 3 domain occupies 456–491 (SCKQGHLACGDLCVPPEQLCDFEEQCAGGEDEQACG). Cystine bridges form between C457/C468, C464/C481, and C475/C490. 4 MAM domains span residues 491–644 (GTTD…DCSP), 654–809 (VSCN…PCWA), 811–969 (NYCS…PCPQ), and 971–1138 (GSCD…HCQQ). N-linked (GlcNAc...) asparagine glycans are attached at residues N583 and N636. N835 is a glycosylation site (N-linked (GlcNAc...) asparagine). Residues 1152–1172 (VPAVVGSALLLLMLLVLLGLG) form a helical membrane-spanning segment. Residues 1173–1216 (GRRWLQKKGSCPFQSNTEATAPGFDNILFNADGVTLPASVTSDP) are Cytoplasmic-facing.

The protein resides in the membrane. Its function is as follows. Probably involved in the sorting and selective transport of receptors and ligands across polarized epithelia. The chain is Apical endosomal glycoprotein from Homo sapiens (Human).